The chain runs to 160 residues: Cyclic pyranopterin monophosphate synthase (160 aa).

Residues 74–76 (LSH) and 112–113 (ME) each bind substrate. The active site involves D127.

Belongs to the MoaC family. Homohexamer; trimer of dimers.

It catalyses the reaction (8S)-3',8-cyclo-7,8-dihydroguanosine 5'-triphosphate = cyclic pyranopterin phosphate + diphosphate. The protein operates within cofactor biosynthesis; molybdopterin biosynthesis. In terms of biological role, catalyzes the conversion of (8S)-3',8-cyclo-7,8-dihydroguanosine 5'-triphosphate to cyclic pyranopterin monophosphate (cPMP). The polypeptide is Cyclic pyranopterin monophosphate synthase (Geotalea uraniireducens (strain Rf4) (Geobacter uraniireducens)).